We begin with the raw amino-acid sequence, 314 residues long: uncharacterized protein (314 aa).

Residues 1 to 24 form the signal peptide; sequence MKRRRRWRGWLLFPALCFCLLCEA. Asn-28, Asn-43, Asn-57, Asn-77, Asn-101, Asn-102, Asn-109, Asn-151, Asn-170, Asn-217, Asn-223, Asn-252, Asn-255, and Asn-268 each carry an N-linked (GlcNAc...) asparagine; by host glycan. Positions 47–114 are enriched in low complexity; the sequence is ATTGTTTTSP…TIGTNATSPS (68 aa). The interval 47-116 is disordered; it reads ATTGTTTTSP…GTNATSPSPS (70 aa).

It belongs to the HHV-5 UL116 protein family. Interacts with gH. Interacts with UL148. In terms of processing, highly glycosylated.

It is found in the virion. Its subcellular location is the host endoplasmic reticulum. Functionally, chaperone protein that cooperates with UL148 to regulate the abundance of gH complexes in virion. First interactor of gH in the host endoplasmic reticulum, regulates the early folding steps of virion assembly. Then, UL148 is recruited and favors the binding of gL. This is an uncharacterized protein from Homo sapiens (Human).